A 551-amino-acid polypeptide reads, in one-letter code: Probable inorganic carbon transporter subunit DabB2 (551 aa).

Helical transmembrane passes span 6–26 (SHTT…AAVI), 42–62 (VQWT…SFLF), 65–85 (QQNL…LALS), 86–106 (IQVN…LSVI), 132–152 (GFFL…AIIA), 187–207 (LLLA…FSQI), 217–237 (LSIA…LKSA), 252–272 (PTPV…IIVL), 284–304 (ALLL…LVML), 321–341 (LGFM…LHLV), 374–394 (VVAW…IAAA), 404–424 (MLPA…LKAL), 434–454 (VAAG…EVFI), and 469–489 (PLLD…VAWL).

It belongs to the inorganic carbon transporter (TC 9.A.2) DabB family. As to quaternary structure, forms a complex with DabA2, possibly a heterodimer.

The protein resides in the cell inner membrane. With respect to regulation, uptake of inorganic carbon by cells in the presence of thiosulphate is fully inhibited by the uncouplers carbonyl cyanide m-chlorophenyl hydrazone (CCCP), carbonyl cyanide p-trifluoromethoxyphenyl hydrazone (FCCP), S13 or SF6847. Not inhibited by the ATPase inhibitor N,N-dicyclohexylcarbodiimide (DCCD). Inorganic carbon uptake is inhibited by the ionophore carbonyl cyanide m-chlorophenyl hydrazone (CCCP), suggesting uptake is coupled to a cation gradient. Part of an energy-coupled inorganic carbon pump; its substrate may be carbon dioxide. Expression of both dabA2 and dabB2 (DAB2) restores growth in ambient air to E.coli deleted of its carbonic anhydrase genes (called CAfree, deletion of 'can' and 'cynT'); neither dabA2 or dabB2 alone is sufficient. Rescue is pH-independent, suggesting it transports CO(2) and not carbonate ions. Together the genes allow greater than normal uptake of inorganic carbon by E.coli. Uptake of carbon dioxide rather than bicarbonate has been suggested based on kinetic calculations. The polypeptide is Probable inorganic carbon transporter subunit DabB2 (Halothiobacillus neapolitanus (strain ATCC 23641 / c2) (Thiobacillus neapolitanus)).